We begin with the raw amino-acid sequence, 488 residues long: Tocopherol cyclase, chloroplastic (488 aa).

The N-terminal 76 residues, 1-76 (MEIRSLIVSM…VPTSPNRELR (76 aa)), are a transit peptide targeting the chloroplast.

It is found in the plastid. Its subcellular location is the chloroplast. The protein localises to the plastoglobule. It catalyses the reaction delta-tocopherol = 2-methyl-6-phytyl-1,4-benzene-1,4-diol. The catalysed reaction is gamma-tocopherol = 2,3-dimethyl-6-phytylbenzene-1,4-diol. It carries out the reaction delta-tocotrienol = 6-geranylgeranyl-2-methylbenzene-1,4-diol. The enzyme catalyses gamma-tocotrienol = 6-geranylgeranyl-2,3-dimethylbenzene-1,4-diol. It participates in cofactor biosynthesis; tocopherol biosynthesis. Functionally, involved in the synthesis of both tocopherols and tocotrienols (vitamin E), which presumably protect photosynthetic complexes from oxidative stress. Catalyzes the conversion of 2-methyl-6-phytyl-1,4-hydroquinone and 2,3-dimethyl-5-phytyl-1,4-hydroquinone (DMPQ) to delta- and gamma-tocopherol respectively. Also converts 2,3-dimethyl-5-geranylgeranyl-1,4-hydroquinone (DMGQ) to gamma-tocotrienol. This is Tocopherol cyclase, chloroplastic (VTE1) from Arabidopsis thaliana (Mouse-ear cress).